The chain runs to 156 residues: Endoribonuclease YbeY (156 aa).

Zn(2+) is bound by residues H115, H119, and H125.

This sequence belongs to the endoribonuclease YbeY family. Zn(2+) serves as cofactor.

The protein localises to the cytoplasm. Single strand-specific metallo-endoribonuclease involved in late-stage 70S ribosome quality control and in maturation of the 3' terminus of the 16S rRNA. The sequence is that of Endoribonuclease YbeY from Actinobacillus succinogenes (strain ATCC 55618 / DSM 22257 / CCUG 43843 / 130Z).